Consider the following 578-residue polypeptide: Potassium-transporting ATPase potassium-binding subunit (578 aa).

The next 11 membrane-spanning stretches (helical) occupy residues 3–23, 67–87, 95–115, 136–156, 181–201, 264–284, 291–311, 396–416, 436–456, 504–524, and 543–563; these read AAAL…AVPL, AAAA…LERL, PAGL…SFAT, ALTV…AALV, LLLP…VPQT, LEAL…GALV, WTVY…TVSA, GLYG…LMVG, LAIL…CLLP, VAML…AGAF, and LFAG…FLPA.

The protein belongs to the KdpA family. In terms of assembly, the system is composed of three essential subunits: KdpA, KdpB and KdpC.

Its subcellular location is the cell inner membrane. Its function is as follows. Part of the high-affinity ATP-driven potassium transport (or Kdp) system, which catalyzes the hydrolysis of ATP coupled with the electrogenic transport of potassium into the cytoplasm. This subunit binds the periplasmic potassium ions and delivers the ions to the membrane domain of KdpB through an intramembrane tunnel. This Anaeromyxobacter dehalogenans (strain 2CP-C) protein is Potassium-transporting ATPase potassium-binding subunit.